We begin with the raw amino-acid sequence, 294 residues long: Dolichol-phosphate mannosyltransferase (294 aa).

A disordered region spans residues 1 to 27; it reads MSIALDMDASAKMRKQPGSSGWSTSST. Residues 1–263 are Cytoplasmic-facing; that stretch reads MSIALDMDAS…QQLVELYRFR (263 aa). Residues 17–27 show a composition bias toward low complexity; that stretch reads PGSSGWSTSST. Residues Pro-35, Glu-39, Val-70, Asp-72, Asp-123, Ala-124, Asp-125, Gln-127, Arg-151, Lys-211, Arg-237, and Lys-243 each coordinate GDP-alpha-D-mannose. Residues Asp-125 and Gln-127 each coordinate Mg(2+). Asp-125 and Gln-127 together coordinate Mn(2+). A helical transmembrane segment spans residues 264-284; sequence FGTVPIVFVLIVLLVLALYIW. Residues 285–294 are Lumenal-facing; sequence SHVLAPMLGA.

This sequence belongs to the glycosyltransferase 2 family. Mg(2+) serves as cofactor. Mn(2+) is required as a cofactor. The cofactor is Ca(2+).

It is found in the endoplasmic reticulum membrane. The catalysed reaction is a di-trans,poly-cis-dolichyl phosphate + GDP-alpha-D-mannose = a di-trans,poly-cis-dolichyl beta-D-mannosyl phosphate + GDP. It functions in the pathway protein modification; protein glycosylation. Functionally, transfers mannose from GDP-mannose to dolichol monophosphate to form dolichol phosphate mannose (Dol-P-Man) which is the mannosyl donor in pathways leading to N-glycosylation, glycosyl phosphatidylinositol membrane anchoring, and O-mannosylation of proteins. This chain is Dolichol-phosphate mannosyltransferase (DPM1), found in Mycosarcoma maydis (Corn smut fungus).